A 1931-amino-acid polypeptide reads, in one-letter code: Cytadherence high molecular weight protein 2 (1931 aa).

Coiled coils occupy residues 1626–1659 (KEHQ…LTES), 1768–1846 (FNTQ…IKTN), and 1903–1930 (HAKK…KQTS).

Functionally, component of the cytoskeleton-like structure which stabilizes the shape of the wall-less Mycoplasma. This cytoskeleton-like network of accessory proteins containing HMW proteins 1 to 5 allows the proper anchoring of cytadhesin proteins in the mycoplasmal membrane at the attachment organelle. This is Cytadherence high molecular weight protein 2 (hlp2) from Mycoplasmoides gallisepticum (strain R(low / passage 15 / clone 2)) (Mycoplasma gallisepticum).